Reading from the N-terminus, the 86-residue chain is UPF0335 protein mll3968 (86 aa).

It belongs to the UPF0335 family.

In Mesorhizobium japonicum (strain LMG 29417 / CECT 9101 / MAFF 303099) (Mesorhizobium loti (strain MAFF 303099)), this protein is UPF0335 protein mll3968.